The following is a 128-amino-acid chain: Arginine decarboxylase proenzyme (128 aa).

S76 functions as the Schiff-base intermediate with substrate; via pyruvic acid in the catalytic mechanism. Position 76 is a pyruvic acid (Ser); by autocatalysis (S76). The active-site Proton acceptor; for processing activity is H81. C96 serves as the catalytic Proton donor; for catalytic activity.

Belongs to the prokaryotic AdoMetDC family. Type 1 subfamily. Heterooctamer of four alpha and four beta chains arranged as a tetramer of alpha/beta heterodimers. Requires pyruvate as cofactor. In terms of processing, is synthesized initially as an inactive proenzyme. Formation of the active enzyme involves a self-maturation process in which the active site pyruvoyl group is generated from an internal serine residue via an autocatalytic post-translational modification. Two non-identical subunits are generated from the proenzyme in this reaction, and the pyruvate is formed at the N-terminus of the alpha chain, which is derived from the carboxyl end of the proenzyme. The post-translation cleavage follows an unusual pathway, termed non-hydrolytic serinolysis, in which the side chain hydroxyl group of the serine supplies its oxygen atom to form the C-terminus of the beta chain, while the remainder of the serine residue undergoes an oxidative deamination to produce ammonia and the pyruvoyl group blocking the N-terminus of the alpha chain.

The enzyme catalyses L-arginine + H(+) = agmatine + CO2. The protein operates within amine and polyamine biosynthesis; agmatine biosynthesis; agmatine from L-arginine: step 1/1. Its function is as follows. Specifically catalyzes the decarboxylation of L-arginine to agmatine. Has no S-adenosylmethionine decarboxylase (AdoMetDC) activity. The chain is Arginine decarboxylase proenzyme from Metallosphaera sedula (strain ATCC 51363 / DSM 5348 / JCM 9185 / NBRC 15509 / TH2).